Here is a 101-residue protein sequence, read N- to C-terminus: NAD(P)H-quinone oxidoreductase subunit 4L, chloroplastic (101 aa).

3 helical membrane passes run 2–22, 32–52, and 61–81; these read MFEL…YGLI, ICLE…SDLF, and IFAI…LSIL.

The protein belongs to the complex I subunit 4L family. As to quaternary structure, NDH is composed of at least 16 different subunits, 5 of which are encoded in the nucleus.

The protein localises to the plastid. The protein resides in the chloroplast thylakoid membrane. The catalysed reaction is a plastoquinone + NADH + (n+1) H(+)(in) = a plastoquinol + NAD(+) + n H(+)(out). It catalyses the reaction a plastoquinone + NADPH + (n+1) H(+)(in) = a plastoquinol + NADP(+) + n H(+)(out). NDH shuttles electrons from NAD(P)H:plastoquinone, via FMN and iron-sulfur (Fe-S) centers, to quinones in the photosynthetic chain and possibly in a chloroplast respiratory chain. The immediate electron acceptor for the enzyme in this species is believed to be plastoquinone. Couples the redox reaction to proton translocation, and thus conserves the redox energy in a proton gradient. This is NAD(P)H-quinone oxidoreductase subunit 4L, chloroplastic from Lolium perenne (Perennial ryegrass).